The chain runs to 128 residues: uncharacterized protein (128 aa).

The first 24 residues, 1-24, serve as a signal peptide directing secretion; the sequence is MKMTKLTTLLLTATLGLASGAALA. 2 stretches are compositionally biased toward low complexity: residues 24–44 and 52–70; these read AAES…NAGQ and NVAP…GNTN. The segment at 24-128 is disordered; that stretch reads AAESNAQSSN…VNTKTDGTTQ (105 aa). Positions 71 to 82 are enriched in polar residues; that stretch reads STMQHPDGSTMN. Basic and acidic residues predominate over residues 85-110; it reads GMTKDEEHKNTMCKDGRCPDINKKVE. A compositionally biased stretch (polar residues) spans 113–128; sequence NGVNNDVNTKTDGTTQ.

This is an uncharacterized protein from Salmonella typhi.